The following is a 256-amino-acid chain: DNA repair protein RecO (256 aa).

The protein belongs to the RecO family.

Involved in DNA repair and RecF pathway recombination. This Shouchella clausii (strain KSM-K16) (Alkalihalobacillus clausii) protein is DNA repair protein RecO.